The primary structure comprises 312 residues: uncharacterized protein (312 aa).

It belongs to the asfivirus CP312R family.

It is found in the virion. This is an uncharacterized protein from African swine fever virus (strain Badajoz 1971 Vero-adapted) (Ba71V).